Reading from the N-terminus, the 255-residue chain is Putative SET domain-containing protein L678 (255 aa).

Positions 5-176 constitute an SET domain; that stretch reads NRISEVFIKK…TGEELTDNYV (172 aa). The interval 235 to 255 is disordered; it reads LQQNSKNLKKNPKKTIKATPK.

Belongs to the class V-like SAM-binding methyltransferase superfamily.

In Acanthamoeba polyphaga mimivirus (APMV), this protein is Putative SET domain-containing protein L678.